The chain runs to 307 residues: ATP-dependent (S)-NAD(P)H-hydrate dehydratase (307 aa).

Positions 1–291 (MDHFLKLLPK…DEIPKLVRDV (291 aa)) constitute a YjeF C-terminal domain. (6S)-NADPHX is bound by residues Gly-96 and 150–156 (NIVEFSR). ATP-binding positions include 194–198 (KGEVD) and 214–223 (SSLRRCGGQG). A (6S)-NADPHX-binding site is contributed by Asp-224.

It belongs to the NnrD/CARKD family. Mg(2+) serves as cofactor.

It catalyses the reaction (6S)-NADHX + ATP = ADP + phosphate + NADH + H(+). It carries out the reaction (6S)-NADPHX + ATP = ADP + phosphate + NADPH + H(+). In terms of biological role, catalyzes the dehydration of the S-form of NAD(P)HX at the expense of ATP, which is converted to ADP. Together with NAD(P)HX epimerase, which catalyzes the epimerization of the S- and R-forms, the enzyme allows the repair of both epimers of NAD(P)HX, a damaged form of NAD(P)H that is a result of enzymatic or heat-dependent hydration. The polypeptide is ATP-dependent (S)-NAD(P)H-hydrate dehydratase (Caenorhabditis briggsae).